The following is a 403-amino-acid chain: NADH-quinone oxidoreductase subunit D (403 aa).

Belongs to the complex I 49 kDa subunit family. As to quaternary structure, NDH-1 is composed of 15 different subunits. Subunits NuoB, C, D, E, F, and G constitute the peripheral sector of the complex.

It localises to the cell membrane. It catalyses the reaction a quinone + NADH + 5 H(+)(in) = a quinol + NAD(+) + 4 H(+)(out). In terms of biological role, NDH-1 shuttles electrons from NADH, via FMN and iron-sulfur (Fe-S) centers, to quinones in the respiratory chain. The immediate electron acceptor for the enzyme in this species is believed to be a menaquinone. Couples the redox reaction to proton translocation (for every two electrons transferred, four hydrogen ions are translocated across the cytoplasmic membrane), and thus conserves the redox energy in a proton gradient. This chain is NADH-quinone oxidoreductase subunit D, found in Deinococcus geothermalis (strain DSM 11300 / CIP 105573 / AG-3a).